The following is a 606-amino-acid chain: DNA-directed RNA polymerase III subunit RPC3 (606 aa).

A leucine-zipper region spans residues L533–L554.

It belongs to the RNA polymerase beta chain family. Component of the RNA polymerase III (Pol III) complex consisting of 17 subunits.

The protein localises to the nucleus. Functionally, DNA-dependent RNA polymerase catalyzes the transcription of DNA into RNA using the four ribonucleoside triphosphates as substrates. Specific core component of RNA polymerase III which synthesizes small RNAs, such as 5S rRNA and tRNAs. The chain is DNA-directed RNA polymerase III subunit RPC3 (RPC82) from Debaryomyces hansenii (strain ATCC 36239 / CBS 767 / BCRC 21394 / JCM 1990 / NBRC 0083 / IGC 2968) (Yeast).